The chain runs to 501 residues: Bifunctional purine biosynthesis protein PurH (501 aa).

The MGS-like domain maps to M1–S144.

The protein belongs to the PurH family.

It carries out the reaction (6R)-10-formyltetrahydrofolate + 5-amino-1-(5-phospho-beta-D-ribosyl)imidazole-4-carboxamide = 5-formamido-1-(5-phospho-D-ribosyl)imidazole-4-carboxamide + (6S)-5,6,7,8-tetrahydrofolate. The enzyme catalyses IMP + H2O = 5-formamido-1-(5-phospho-D-ribosyl)imidazole-4-carboxamide. It participates in purine metabolism; IMP biosynthesis via de novo pathway; 5-formamido-1-(5-phospho-D-ribosyl)imidazole-4-carboxamide from 5-amino-1-(5-phospho-D-ribosyl)imidazole-4-carboxamide (10-formyl THF route): step 1/1. The protein operates within purine metabolism; IMP biosynthesis via de novo pathway; IMP from 5-formamido-1-(5-phospho-D-ribosyl)imidazole-4-carboxamide: step 1/1. The sequence is that of Bifunctional purine biosynthesis protein PurH from Clostridium botulinum (strain Eklund 17B / Type B).